The following is a 234-amino-acid chain: CD-NTase-associated protein 13 (234 aa).

The chain crosses the membrane as a helical span at residues 20–42; it reads TIMKNVIANVSTAITLALMILWI.

In the C-terminal section; belongs to the bacterial STING family.

The protein resides in the cell inner membrane. In terms of biological role, effector protein of a CBASS antivirus system. CBASS (cyclic oligonucleotide-based antiphage signaling system) provides immunity against bacteriophage. The CD-NTase protein synthesizes cyclic nucleotides in response to infection; these serve as specific second messenger signals. The signals activate a diverse range of effectors, leading to bacterial cell death and thus abortive phage infection. A type I-D CBASS(GG) system. Functionally, binds c-di-GMP (synthesized by the cognate CdnE encoded upstream in the same operon) and about 10-fold less well 3'3'-cGAMP, but not c-di-AMP, 2'3'-cGAMP or cUMP-AMP (tested with a protein without the transmembrane region). The effector protein for this CBASS system, its activity is stimulated by c-di-GMP and leads to cell death. The sequence is that of CD-NTase-associated protein 13 from Roseivirga ehrenbergii (strain DSM 102268 / JCM 13514 / KCTC 12282 / NCIMB 14502 / KMM 6017).